The chain runs to 344 residues: Phosphoribosylformylglycinamidine cyclo-ligase (344 aa).

Belongs to the AIR synthase family.

Its subcellular location is the cytoplasm. It catalyses the reaction 2-formamido-N(1)-(5-O-phospho-beta-D-ribosyl)acetamidine + ATP = 5-amino-1-(5-phospho-beta-D-ribosyl)imidazole + ADP + phosphate + H(+). Its pathway is purine metabolism; IMP biosynthesis via de novo pathway; 5-amino-1-(5-phospho-D-ribosyl)imidazole from N(2)-formyl-N(1)-(5-phospho-D-ribosyl)glycinamide: step 2/2. This is Phosphoribosylformylglycinamidine cyclo-ligase from Exiguobacterium sibiricum (strain DSM 17290 / CCUG 55495 / CIP 109462 / JCM 13490 / 255-15).